A 370-amino-acid chain; its full sequence is tRNA/tmRNA (uracil-C(5))-methyltransferase (370 aa).

S-adenosyl-L-methionine contacts are provided by Q190, Y218, N223, E239, and D299. C324 functions as the Nucleophile in the catalytic mechanism. E358 (proton acceptor) is an active-site residue.

This sequence belongs to the class I-like SAM-binding methyltransferase superfamily. RNA M5U methyltransferase family. TrmA subfamily.

It catalyses the reaction uridine(54) in tRNA + S-adenosyl-L-methionine = 5-methyluridine(54) in tRNA + S-adenosyl-L-homocysteine + H(+). The enzyme catalyses uridine(341) in tmRNA + S-adenosyl-L-methionine = 5-methyluridine(341) in tmRNA + S-adenosyl-L-homocysteine + H(+). Functionally, dual-specificity methyltransferase that catalyzes the formation of 5-methyluridine at position 54 (m5U54) in all tRNAs, and that of position 341 (m5U341) in tmRNA (transfer-mRNA). This chain is tRNA/tmRNA (uracil-C(5))-methyltransferase, found in Sodalis glossinidius (strain morsitans).